A 279-amino-acid chain; its full sequence is Complement component 1 Q subcomponent-binding protein, mitochondrial (279 aa).

The transit peptide at Met-1–Ala-71 directs the protein to the mitochondrion. The C1q binding stretch occupies residues Thr-74 to Glu-91. N6-acetyllysine occurs at positions 89 and 92. The tract at residues Asn-134–Ser-162 is disordered. An interaction with MAVS region spans residues Phe-166–Thr-210. Tyr-185 carries the phosphotyrosine modification. 2 positions are modified to phosphoserine: Ser-198 and Ser-202. Thr-211 carries the post-translational modification Phosphothreonine.

Belongs to the MAM33 family. In terms of assembly, homotrimer; three monomers form a donut-shaped structure with an unusually asymmetric charge distribution on the surface. Interacts with CDK13, HRK, VTN, NFYB, ADRA1B, FOXC1, DDX21, DDX50, NCL, SRSF1 and SRSF9. Interacts with CD93; the association may represent a cell surface C1q receptor. Interacts with KRT1; the association represents a cell surface kininogen receptor. Interacts with CD209; the interaction is indicative for a C1q:C1QBP:CD209 signaling complex. Interacts with FBL and RRP1; the respective interactions with C1QBP are competitive. Probably associates with the mitoribosome. Interacts with MAVS; the interaction occurs upon viral transfection. Interacts with PPIF. Interacts with U2AF1L4. Interacts with PLEKHN1. Interacts with VGF-derived peptide TLQP-21. Interacts with MRE11 and RAD50; forming the MRC (MRE11-RAD50-C1QBP) complex that inhibits the activity of MRE11. As to expression, ubiquitous.

The protein localises to the mitochondrion matrix. The protein resides in the nucleus. Its subcellular location is the cell membrane. It is found in the secreted. It localises to the cytoplasm. The protein localises to the nucleolus. Functionally, multifunctional and multicompartmental protein involved in inflammation and infection processes, ribosome biogenesis, protein synthesis in mitochondria, regulation of apoptosis, transcriptional regulation and pre-mRNA splicing. At the cell surface is thought to act as an endothelial receptor for plasma proteins of the complement and kallikrein-kinin cascades. Putative receptor for C1q; specifically binds to the globular 'heads' of C1q thus inhibiting C1; may perform the receptor function through a complex with C1qR/CD93. In complex with cytokeratin-1/KRT1 is a high affinity receptor for kininogen-1/HMWK. Can also bind other plasma proteins, such as coagulation factor XII leading to its autoactivation. May function to bind initially fluid kininogen-1 to the cell membrane. The secreted form may enhance both extrinsic and intrinsic coagulation pathways. It is postulated that the cell surface form requires docking with transmembrane proteins for downstream signaling which might be specific for a cell-type or response. By acting as C1q receptor is involved in chemotaxis of immature dendritic cells and neutrophils and is proposed to signal through CD209/DC-SIGN on immature dendritic cells, through integrin alpha-4/beta-1 during trophoblast invasion of the decidua, and through integrin beta-1 during endothelial cell adhesion and spreading. Signaling involved in inhibition of innate immune response is implicating the PI3K-AKT/PKB pathway. Required for protein synthesis in mitochondria. In mitochondrial translation may be involved in formation of functional 55S mitoribosomes; the function seems to involve its RNA-binding activity. Acts as a RNA modification reader, which specifically recognizes and binds mitochondrial RNAs modified by C5-methylcytosine (m5C) in response to stress, and promotes recruitment of the mitochondrial degradosome complex, leading to their degradation. May be involved in the nucleolar ribosome maturation process; the function may involve the exchange of FBL for RRP1 in the association with pre-ribosome particles. Involved in regulation of RNA splicing by inhibiting the RNA-binding capacity of SRSF1 and its phosphorylation. Is required for the nuclear translocation of splicing factor U2AF1L4. Involved in regulation of CDKN2A- and HRK-mediated apoptosis. Stabilizes mitochondrial CDKN2A isoform smARF. May be involved in regulation of FOXC1 transcriptional activity and NFY/CCAAT-binding factor complex-mediated transcription. May play a role in antibacterial defense as it can bind to cell surface hyaluronan and inhibit Streptococcus pneumoniae hyaluronate lyase. May be involved in modulation of the immune response; ligation by HCV core protein is resulting in suppression of interleukin-12 production in monocyte-derived dendritic cells. Involved in regulation of antiviral response by inhibiting RIGI- and IFIH1-mediated signaling pathways probably involving its association with MAVS after viral infection. Acts as a regulator of DNA repair via homologous recombination by inhibiting the activity of MRE11: interacts with unphosphorylated MRE11 and RAD50 in absence of DNA damage, preventing formation and activity of the MRN complex. Following DNA damage, dissociates from phosphorylated MRE11, allowing formation of the MRN complex. The polypeptide is Complement component 1 Q subcomponent-binding protein, mitochondrial (C1qbp) (Rattus norvegicus (Rat)).